Here is a 289-residue protein sequence, read N- to C-terminus: MKVLVNDRLVERNDATVDVEDRGYQFGDGVYEVVRLYNGKFFTYNEHIDRLYASAAKIDLVIPYSKETLRALLDKLVAENNINTGNVYLQVTRGVQNPRNHVLPDDFPLEGVLTAAAREVPRNERQFIEGGSAITEEDVRWLRCDIKSLNLLGNILAKNKAHQQNALEAILHRGEQVTECSASNVSIIKDGVLWTHAADNLILNGITRQVIIDVAKKNGIPVKEADFTLTDLREADEVFISSTTIEITPITHIDGVQVADGKRGPITAQLHNYFVEEIVRACGELEYAK.

Position 31 (tyrosine 31) interacts with substrate. Arginine 50 is a binding site for pyridoxal 5'-phosphate. Positions 99 and 101 each coordinate substrate. The Proton acceptor role is filled by lysine 147. At lysine 147 the chain carries N6-(pyridoxal phosphate)lysine. Glutamate 179 is a binding site for pyridoxal 5'-phosphate.

It belongs to the class-IV pyridoxal-phosphate-dependent aminotransferase family. Homodimer. The cofactor is pyridoxal 5'-phosphate.

The enzyme catalyses D-alanine + 2-oxoglutarate = D-glutamate + pyruvate. Its function is as follows. Acts on the D-isomers of alanine, leucine, aspartate, glutamate, aminobutyrate, norvaline and asparagine. The enzyme transfers an amino group from a substrate D-amino acid to the pyridoxal phosphate cofactor to form pyridoxamine and an alpha-keto acid in the first half-reaction. The second half-reaction is the reverse of the first, transferring the amino group from the pyridoxamine to a second alpha-keto acid to form the product D-amino acid via a ping-pong mechanism. This is an important process in the formation of D-alanine and D-glutamate, which are essential bacterial cell wall components. The protein is D-alanine aminotransferase (dat) of Listeria innocua serovar 6a (strain ATCC BAA-680 / CLIP 11262).